The chain runs to 151 residues: Small ribosomal subunit protein uS15z (151 aa).

Belongs to the universal ribosomal protein uS15 family.

This chain is Small ribosomal subunit protein uS15z, found in Oryza sativa subsp. japonica (Rice).